A 139-amino-acid chain; its full sequence is Putative pre-16S rRNA nuclease (139 aa).

This sequence belongs to the YqgF nuclease family.

The protein localises to the cytoplasm. Functionally, could be a nuclease involved in processing of the 5'-end of pre-16S rRNA. The sequence is that of Putative pre-16S rRNA nuclease from Proteus mirabilis (strain HI4320).